The following is a 382-amino-acid chain: Alanine racemase (382 aa).

The active-site Proton acceptor; specific for D-alanine is lysine 39. Lysine 39 carries the post-translational modification N6-(pyridoxal phosphate)lysine. Residue arginine 138 participates in substrate binding. Tyrosine 265 serves as the catalytic Proton acceptor; specific for L-alanine. Position 312 (methionine 312) interacts with substrate.

The protein belongs to the alanine racemase family. Requires pyridoxal 5'-phosphate as cofactor.

The enzyme catalyses L-alanine = D-alanine. It functions in the pathway amino-acid biosynthesis; D-alanine biosynthesis; D-alanine from L-alanine: step 1/1. Functionally, catalyzes the interconversion of L-alanine and D-alanine. May also act on other amino acids. In Staphylococcus saprophyticus subsp. saprophyticus (strain ATCC 15305 / DSM 20229 / NCIMB 8711 / NCTC 7292 / S-41), this protein is Alanine racemase (alr).